The primary structure comprises 612 residues: Probable methyltransferase PMT9 (612 aa).

The Cytoplasmic segment spans residues 1–14 (MKHFRTERVRATPK). A helical; Signal-anchor for type II membrane protein membrane pass occupies residues 15-35 (LFTYVLVGFIALLGLTCLYYG). The Lumenal segment spans residues 36-612 (SSFAPGSRKS…LWSLPAISVS (577 aa)). N-linked (GlcNAc...) asparagine glycans are attached at residues Asn-107, Asn-383, and Asn-562.

The protein belongs to the methyltransferase superfamily.

The protein resides in the golgi apparatus membrane. The chain is Probable methyltransferase PMT9 from Arabidopsis thaliana (Mouse-ear cress).